The following is an 837-amino-acid chain: Semaphorin-4B (837 aa).

The first 43 residues, 1–43 (MLRTAMGLRSWLAAPWGALPPRPPLLLLLLLLLLLQPPPPTWA), serve as a signal peptide directing secretion. Residues 44 to 717 (LSPRISLPLG…WGADRSYWKE (674 aa)) lie on the Extracellular side of the membrane. The 477-residue stretch at 47 to 523 (RISLPLGSEE…SHSGVVQVPM (477 aa)) folds into the Sema domain. N-linked (GlcNAc...) asparagine glycosylation is found at N69 and N96. 2 disulfide bridges follow: C120–C131 and C149–C158. A glycan (N-linked (GlcNAc...) asparagine) is linked at N165. 2 cysteine pairs are disulfide-bonded: C286/C399 and C310/C359. 2 N-linked (GlcNAc...) asparagine glycosylation sites follow: N410 and N525. Positions 525 to 579 (NCSLYRSCGDCLLARDPYCAWSGSSCKHVSLYQPQLATRPWIQDIEGASAKDLCS) constitute a PSI domain. 2 disulfide bridges follow: C526-C543 and C611-C656. An Ig-like C2-type domain is found at 604–663 (NTVNTLACPLLSNLATRLWLRNGAPVNASASCHVLPTGDLLLVGTQQLGEFQCWSLEEGF). N-linked (GlcNAc...) asparagine glycosylation is present at N630. A helical transmembrane segment spans residues 718-738 (FLVMCTLFVLAVLLPVLFLLY). The Cytoplasmic segment spans residues 739–837 (RHRNSMKVFL…LGSEIRDSVV (99 aa)). Positions 767 to 805 (PETRPLNGLGPPSTPLDHRGYQSLSDSPPGSRVFTESEK) are disordered. S793, S818, and S830 each carry phosphoserine.

It belongs to the semaphorin family.

It localises to the membrane. In terms of biological role, inhibits axonal extension by providing local signals to specify territories inaccessible for growing axons. The sequence is that of Semaphorin-4B from Homo sapiens (Human).